The following is a 289-amino-acid chain: 4-diphosphocytidyl-2-C-methyl-D-erythritol kinase (289 aa).

Residue K10 is part of the active site. 94-104 (PVAAGLAGGSS) contributes to the ATP binding site. D136 is a catalytic residue.

The protein belongs to the GHMP kinase family. IspE subfamily.

It catalyses the reaction 4-CDP-2-C-methyl-D-erythritol + ATP = 4-CDP-2-C-methyl-D-erythritol 2-phosphate + ADP + H(+). It functions in the pathway isoprenoid biosynthesis; isopentenyl diphosphate biosynthesis via DXP pathway; isopentenyl diphosphate from 1-deoxy-D-xylulose 5-phosphate: step 3/6. In terms of biological role, catalyzes the phosphorylation of the position 2 hydroxy group of 4-diphosphocytidyl-2C-methyl-D-erythritol. In Bacillus licheniformis (strain ATCC 14580 / DSM 13 / JCM 2505 / CCUG 7422 / NBRC 12200 / NCIMB 9375 / NCTC 10341 / NRRL NRS-1264 / Gibson 46), this protein is 4-diphosphocytidyl-2-C-methyl-D-erythritol kinase.